The sequence spans 365 residues: Chorismate synthase (365 aa).

Arg-46 contacts NADP(+). FMN-binding positions include 124-126 (RAS), Gly-284, 299-303 (KPTPS), and Arg-326.

The protein belongs to the chorismate synthase family. FMNH2 serves as cofactor.

The enzyme catalyses 5-O-(1-carboxyvinyl)-3-phosphoshikimate = chorismate + phosphate. It functions in the pathway metabolic intermediate biosynthesis; chorismate biosynthesis; chorismate from D-erythrose 4-phosphate and phosphoenolpyruvate: step 7/7. Functionally, catalyzes the anti-1,4-elimination of the C-3 phosphate and the C-6 proR hydrogen from 5-enolpyruvylshikimate-3-phosphate (EPSP) to yield chorismate, which is the branch point compound that serves as the starting substrate for the three terminal pathways of aromatic amino acid biosynthesis. This reaction introduces a second double bond into the aromatic ring system. This chain is Chorismate synthase, found in Pyrobaculum islandicum (strain DSM 4184 / JCM 9189 / GEO3).